The following is a 440-amino-acid chain: Thymidine phosphorylase (440 aa).

This sequence belongs to the thymidine/pyrimidine-nucleoside phosphorylase family. As to quaternary structure, homodimer.

It catalyses the reaction thymidine + phosphate = 2-deoxy-alpha-D-ribose 1-phosphate + thymine. Its pathway is pyrimidine metabolism; dTMP biosynthesis via salvage pathway; dTMP from thymine: step 1/2. In terms of biological role, the enzymes which catalyze the reversible phosphorolysis of pyrimidine nucleosides are involved in the degradation of these compounds and in their utilization as carbon and energy sources, or in the rescue of pyrimidine bases for nucleotide synthesis. This chain is Thymidine phosphorylase, found in Burkholderia pseudomallei (strain 1106a).